We begin with the raw amino-acid sequence, 541 residues long: Arginine--tRNA ligase (541 aa).

The 'HIGH' region signature appears at 123 to 133; the sequence is ANPTGFLHIGH.

Belongs to the class-I aminoacyl-tRNA synthetase family. In terms of assembly, monomer.

Its subcellular location is the cytoplasm. It carries out the reaction tRNA(Arg) + L-arginine + ATP = L-arginyl-tRNA(Arg) + AMP + diphosphate. The chain is Arginine--tRNA ligase from Metamycoplasma arthritidis (strain 158L3-1) (Mycoplasma arthritidis).